A 107-amino-acid polypeptide reads, in one-letter code: Sperm-specific class P protein 31 (107 aa).

Residues methionine 1–serine 107 form the MSP domain.

In terms of tissue distribution, expressed at higher level in testis.

This Caenorhabditis elegans protein is Sperm-specific class P protein 31 (ssp-31).